Consider the following 1008-residue polypeptide: ATP-dependent DNA/RNA helicase DHX36 (1008 aa).

The tract at residues 1 to 51 (MSYDYHQNWGRDGGPRSSGGGYGGGPAGGHGGNRGSGGGGGGGGGGRGGRG) is required for recruitment to cytoplasmic stress granules. The interval 1–58 (MSYDYHQNWGRDGGPRSSGGGYGGGPAGGHGGNRGSGGGGGGGGGGRGGRGRHPGHLK) is disordered. Positions 1–104 (MSYDYHQNWG…IVQLLNSVQA (104 aa)) are required for the pre-miR-134 transport. A necessary for nuclear and nucleolar caps localizations region spans residues 1 to 200 (MSYDYHQNWG…KKNDLRYIEM (200 aa)). The span at 16–48 (RSSGGGYGGGPAGGHGGNRGSGGGGGGGGGGRG) shows a compositional bias: gly residues. A DSM (DHX36-specific motif) region spans residues 53 to 75 (HPGHLKGREIGMWYAKKQGQKNK). A required for G4-DNA- and G4-RNA-binding region spans residues 53-105 (HPGHLKGREIGMWYAKKQGQKNKEAERQERAVVHMDERREEQIVQLLNSVQAK). A coiled-coil region spans residues 72-157 (QKNKEAERQE…INQEKKMFRI (86 aa)). RecA-like domain stretches follow at residues 106–386 (NDKE…MIHI) and 387–628 (PGFT…DYQL). S161 is modified (phosphoserine). One can recognise a Helicase ATP-binding domain in the interval 217–387 (VNLIDNHQVT…FGNCPMIHIP (171 aa)). 233–238 (GCGKTT) serves as a coordination point for ATP. The segment at 265 to 317 (RRISAISVAERVAAERAESCGSGNSTGYQIRLQSRLPRKQGSILYCTTGIILQ) is necessary for interaction with single-stranded DNA at the 3'-end of the G4-DNA structure. The DEAH box motif lies at 334–337 (DEIH). Mg(2+) contacts are provided by E335 and H337. A Helicase C-terminal domain is found at 477-647 (ALIRYIVLEE…ELCLQIKILR (171 aa)). The interval 498 to 557 (WDNISTLHDLLMSQVMFKSDKFLIIPLHSLMPTVNQTQVFKRTPPGVRKIVIATNIAETS) is necessary for interaction with single-stranded DNA at the 3'-end of the G4-DNA structure. Positions 517–528 (DKFLIIPLHSLM) match the Nuclear localization signal motif. Residues S557 and 602-605 (RAGR) contribute to the ATP site. A WH domain region spans residues 629 to 698 (PEILRTPLEE…LGVHLARLPV (70 aa)). Necessary for interaction with single-stranded DNA at the 3'-end of the G4-DNA structure stretches follow at residues 638–697 (ELCL…ARLP), 849–860 (NLGKKRKMVKVY), and 870–900 (HPKSVNVEQTDFHYNWLIYHLKMRTSSIYLY). Residues 841 to 905 (PKVAKIRLNL…SIYLYDCTEV (65 aa)) are OB-fold-like subdomains. K947 bears the N6-acetyllysine mark. The residue at position 963 (S963) is a Phosphoserine.

Belongs to the DEAD box helicase family. DEAH subfamily. In terms of assembly, found in a multi-helicase-TICAM1 complex at least composed of DHX36, DDX1, DDX21 and TICAM1; this complex exists in resting cells with or without dsRNA poly(I:C) ligand stimulation. Interacts (via C-terminus) with TICAM1 (via TIR domain). Interacts (via C-terminus) with DDX21; this interaction serves as bridges to TICAM1. Interacts with TERT; this interaction is dependent on the ability of DHX36 to bind to the G-quadruplex RNA (G4-RNA) structure present in the telomerase RNA template component (TERC). Interacts with DKC1; this interaction is dependent on the ability of DHX36 to bind to the G4-RNA structure present in TERC. Interacts with PARN; this interaction stimulates PARN to enhance uPA mRNA decay. Interacts with EXOSC3; this interaction occurs in a RNase-insensitive manner. Interacts with EXOSC10; this interaction occurs in a RNase-insensitive manner. Interacts with ILF3; this interaction occurs in a RNA-dependent manner. Interacts with ELAVL1; this interaction occurs in an RNA-dependent manner. Interacts with DDX5; this interaction occurs in a RNA-dependent manner. Interacts with DDX17; this interaction occurs in a RNA-dependent manner. Interacts with HDAC1; this interaction occurs in a RNA-dependent manner. Interacts with HDAC3; this interaction occurs in a RNA-dependent manner. Interacts with HDAC4. Interacts with AGO1. Interacts with AGO2. Interacts with ERCC6. It depends on Mg(2+) as a cofactor. As to expression, highly expressed in testis.

The protein localises to the nucleus. Its subcellular location is the cytoplasm. It localises to the cytosol. The protein resides in the stress granule. It is found in the nucleus speckle. The protein localises to the chromosome. Its subcellular location is the telomere. It localises to the mitochondrion. The protein resides in the perikaryon. It is found in the cell projection. The protein localises to the dendrite. Its subcellular location is the axon. The catalysed reaction is ATP + H2O = ADP + phosphate + H(+). Its activity is regulated as follows. ATPase activity is enhanced in the presence of homomeric poly(U) RNAs, but not by double-stranded DNA (dsDNA), double-stranded RNA (dsRNA) and tRNA. Functionally, multifunctional ATP-dependent helicase that unwinds G-quadruplex (G4) structures. Plays a role in many biological processes such as genomic integrity, gene expression regulations and as a sensor to initiate antiviral responses. G4 structures correspond to helical structures containing guanine tetrads. Binds with high affinity to and unwinds G4 structures that are formed in nucleic acids (G4-DNA and G4-RNA). Plays a role in genomic integrity. Converts the G4-RNA structure present in telomerase RNA template component (TREC) into a double-stranded RNA to promote P1 helix formation that acts as a template boundary ensuring accurate reverse transcription. Plays a role in transcriptional regulation. Resolves G4-DNA structures in promoters of genes, such as YY1, KIT/c-kit and ALPL and positively regulates their expression. Plays a role in post-transcriptional regulation. Unwinds a G4-RNA structure located in the 3'-UTR polyadenylation site of the pre-mRNA TP53 and stimulates TP53 pre-mRNA 3'-end processing in response to ultraviolet (UV)-induced DNA damage. Binds to the precursor-microRNA-134 (pre-miR-134) terminal loop and regulates its transport into the synapto-dendritic compartment. Involved in the pre-miR-134-dependent inhibition of target gene expression and the control of dendritic spine size. Plays a role in the regulation of cytoplasmic mRNA translation and mRNA stability. Binds to both G4-RNA structures and alternative non-quadruplex-forming sequence within the 3'-UTR of the PITX1 mRNA regulating negatively PITX1 protein expression. Binds to both G4-RNA structure in the 5'-UTR and AU-rich elements (AREs) localized in the 3'-UTR of NKX2-5 mRNA to either stimulate protein translation or induce mRNA decay in an ELAVL1-dependent manner, respectively. Also binds to ARE sequences present in several mRNAs mediating exosome-mediated 3'-5' mRNA degradation. Involved in cytoplasmic urokinase-type plasminogen activator (uPA) mRNA decay. Component of a multi-helicase-TICAM1 complex that acts as a cytoplasmic sensor of viral double-stranded RNA (dsRNA) and plays a role in the activation of a cascade of antiviral responses including the induction of pro-inflammatory cytokines via the adapter molecule TICAM1. Required for early embryonic development and hematopoiesis. Involved in the regulation of cardioblast differentiation and proliferation during heart development. Involved in spermatogonia differentiation. May play a role in ossification. This is ATP-dependent DNA/RNA helicase DHX36 from Homo sapiens (Human).